A 37-amino-acid chain; its full sequence is Large ribosomal subunit protein bL36A (37 aa).

The protein belongs to the bacterial ribosomal protein bL36 family.

The sequence is that of Large ribosomal subunit protein bL36A from Arthrobacter sp. (strain FB24).